A 523-amino-acid polypeptide reads, in one-letter code: Cytochrome b5 reductase 4 (523 aa).

The Cytochrome b5 heme-binding domain occupies 54-130 (LIDVTEEELA…LKECLIGRMA (77 aa)). Histidine 89 and histidine 112 together coordinate heme. Residues 167–258 (ESHPWYDWFQ…KEPVSWKSLG (92 aa)) enclose the CS domain. An FAD-binding FR-type domain is found at 275–387 (LYYRKCRLAS…SNPQGTFSSF (113 aa)). FAD-binding positions include 367–382 (ENLT…NPQG) and 394–426 (DVFL…KAKL).

Belongs to the flavoprotein pyridine nucleotide cytochrome reductase family. Requires FAD as cofactor.

The protein resides in the endoplasmic reticulum. It carries out the reaction 2 Fe(III)-[cytochrome b5] + NADH = 2 Fe(II)-[cytochrome b5] + NAD(+) + H(+). Its function is as follows. NADH-cytochrome b5 reductase involved in endoplasmic reticulum stress response pathway. The polypeptide is Cytochrome b5 reductase 4 (cyb5r4) (Xenopus tropicalis (Western clawed frog)).